The primary structure comprises 466 residues: Oxysterol-binding protein 4 (466 aa).

The segment covering 1–12 (MEIGTSSTTNNI) has biased composition (polar residues). A disordered region spans residues 1–67 (MEIGTSSTTN…STSPPSPPIE (67 aa)). Residues 24–45 (NNNNHNNNSSNNSSNNNSISSS) are compositionally biased toward low complexity. Residues 46-60 (PTDSSQLMNGEQSTS) show a composition bias toward polar residues.

Belongs to the OSBP family.

The chain is Oxysterol-binding protein 4 (osbD) from Dictyostelium discoideum (Social amoeba).